The sequence spans 373 residues: Extensin-1 (373 aa).

An N-terminal signal peptide occupies residues 1–19 (MASFLVLAFSLAFVSQTTA). 36 consecutive repeat copies span residues 25-33 (SPPPPVKHY), 34-40 (SPPPVYK), 41-49 (SPPPPVKHY), 50-56 (SPPPVYK), 57-65 (SPPPPVKHY), 66-72 (SPPPVYK), 73-81 (SPPPPVKYY), 82-88 (SPPPVYK), 97-105 (SPPPPVKHY), 106-112 (SPPPVYK), 113-121 (SPPPPVKHY), 122-128 (SPPPVYK), 129-137 (SPPPPVKHY), 138-144 (SPPPVYK), 145-153 (SPPPPVKHY), 154-160 (SPPPVYK), 161-169 (SPPPPVKYY), 170-176 (SPPPVYK), 177-185 (SPPPPVKHY), 186-192 (SPPPVYK), 193-201 (SPPPPVKYY), 202-208 (SPPPVYK), 209-217 (SPPPPVKHY), 218-224 (SPPPVYK), 225-233 (SPPPPVKYY), 234-240 (SPPPVYK), 241-248 (SPPPPVHY), 249-256 (SPPPVVYH), 257-264 (SPPPPVHY), 265-272 (SPPPVVYH), 273-280 (SPPPPVHY), 281-288 (SPPPVVYH), 289-296 (SPPPPVHY), 297-304 (SPPPVVYH), 305-312 (SPPPPVHY), and 313-320 (SPPPVVYH). Residues 25–233 (SPPPPVKHYS…KSPPPPVKYY (209 aa)) are 13 X 9 AA repeats of S-P-P-P-P-V-K-[HY]-Y. The tract at residues 34 to 240 (SPPPVYKSPP…KYYSPPPVYK (207 aa)) is 13 X 7 AA repeats of S-P-P-P-V-Y-K. Positions 241–312 (SPPPPVHYSP…YHSPPPPVHY (72 aa)) are 5 X 8 AA repeats of S-P-P-P-P-V-H-Y. A 5 X 8 AA repeats of S-P-P-P-V-V-Y-H region spans residues 249–320 (SPPPVVYHSP…HYSPPPVVYH (72 aa)). Isodityrosine cross-linking stretches follow at residues 329 to 332 (YEYK) and 363 to 366 (YLYK). Residues 349–373 (PPPPVHHYSPPHQPYLYKSPPPPHY) are disordered.

This sequence belongs to the extensin family. Post-translationally, extensins contain a characteristic repeat of the pentapeptide Ser-Pro(4). For this particular extensin, a typical repeat of Ser-Pro(3) is found. In both cases, the proline residues are hydroxylated and then O-glycosylated (arabinosylation). Synthetised as soluble proteins which become insolubilised in the cell wall through the intermolecular cross-linking of Tyr on adjacent monomers. Isodityrosine (IDT) stabilizes and makes rigid the part of the polypeptide where IDT functional sites are present. Predominantly expressed in the roots. Not detected in the leaves, nor in flowers or flower buds. Wounding reverses this pattern, turning on the gene in the leaves and repressing it in the roots.

Its subcellular location is the secreted. It is found in the primary cell wall. Functionally, structural component which strengthens the primary cell wall. In Arabidopsis thaliana (Mouse-ear cress), this protein is Extensin-1.